An 88-amino-acid polypeptide reads, in one-letter code: Synaptonemal complex central element protein 3 (88 aa).

Residues 7–75 are a coiled coil; the sequence is EERNYDNMLK…FVNCKEEMEK (69 aa).

As to quaternary structure, homodimer. Can form higher-order homooligomers. Interacts with SYCP1 (via tetrameric core); the interaction remodels SYCP1 homotetramers to 2:1 heterotrimers with SYCE3. SYCP1/SYCE3 heterotrimers form lattice assemblies as part of the mature synaptonemal complex via both lateral and head-to-head interactions. Interacts with the SYCE1-SIX6OS1 complex; the interaction recruits the SYCE1-SIX6OS1 complex to the central element of the synaptonemal complex. Interacts with the SYCE2-TEX12 complex; the interaction promotes fibrous assembly of SYCE2-TEX12 as part of the synaptonemal complex central element. Interacts with SYCE1. Interacts with SYCE2. Interacts with proteasome subunit PSMA8; to participate in meiosis progression during spermatogenesis. Interacts with SPO16.

Its subcellular location is the nucleus. The protein localises to the chromosome. Its function is as follows. Major component of the transverse central element of synaptonemal complexes (SCS), formed between homologous chromosomes during meiotic prophase. Required for the assembly of the central element of the synaptonemal complex during meiosis, via remodeling of SYCP1 lattice structures and promoting recruitment of SYCE2-TEX12 and SYCE1-SIX60S1 complexes. Required for chromosome loading of the central element-specific SCS proteins, and for initiating synapsis between homologous chromosomes. Chromosome loading appears to require SYCP1. Required for fertility and normal testis development. In Homo sapiens (Human), this protein is Synaptonemal complex central element protein 3.